The primary structure comprises 235 residues: Large ribosomal subunit protein uL1 (235 aa).

Belongs to the universal ribosomal protein uL1 family. In terms of assembly, part of the 50S ribosomal subunit.

In terms of biological role, binds directly to 23S rRNA. The L1 stalk is quite mobile in the ribosome, and is involved in E site tRNA release. Functionally, protein L1 is also a translational repressor protein, it controls the translation of the L11 operon by binding to its mRNA. This is Large ribosomal subunit protein uL1 from Halothermothrix orenii (strain H 168 / OCM 544 / DSM 9562).